The following is a 612-amino-acid chain: Poly(A) RNA polymerase, mitochondrial (612 aa).

The N-terminal 57 residues, 1 to 57 (MNSLVRRSAQQLSLWRTYCIKHNASEAASPGRNAGRPNYEEFIGRHQRQAQCSIVVQ), are a transit peptide targeting the mitochondrion. ATP contacts are provided by residues 83-89 (YCVRQDE) and 228-229 (GC). Residues Asp-230 and Asp-232 each contribute to the Mg(2+) site. The region spanning 427-463 (SLSELLLQFFEFYSQFDFHNRAISLNEGKPLSKPDHS) is the PAP-associated domain. Disordered regions lie at residues 555 to 574 (AGATSSSTPPTPAITYKSAS) and 588 to 612 (SELKQLRGSGSSVPTSSPNNRRRSR).

Belongs to the DNA polymerase type-B-like family. Requires Mg(2+) as cofactor. Mn(2+) serves as cofactor.

The protein localises to the mitochondrion. It catalyses the reaction RNA(n) + ATP = RNA(n)-3'-adenine ribonucleotide + diphosphate. In terms of biological role, polymerase that creates the 3' poly(A) tail of mitochondrial transcripts. This is not required for transcript stability or translation but may maintain mRNA integrity by protecting 3' termini from degradation. In Drosophila melanogaster (Fruit fly), this protein is Poly(A) RNA polymerase, mitochondrial.